A 326-amino-acid polypeptide reads, in one-letter code: Beta-ketoacyl-[acyl-carrier-protein] synthase III (326 aa).

Residues C111 and H252 contribute to the active site. Residues 253–257 form an ACP-binding region; that stretch reads QANIR. N282 is an active-site residue.

Belongs to the thiolase-like superfamily. FabH family. As to quaternary structure, homodimer.

It is found in the plastid. It localises to the chloroplast. The enzyme catalyses malonyl-[ACP] + acetyl-CoA + H(+) = 3-oxobutanoyl-[ACP] + CO2 + CoA. It functions in the pathway lipid metabolism; fatty acid biosynthesis. Its function is as follows. Catalyzes the condensation reaction of fatty acid synthesis by the addition to an acyl acceptor of two carbons from malonyl-ACP. Catalyzes the first condensation reaction which initiates fatty acid synthesis and may therefore play a role in governing the total rate of fatty acid production. Possesses both acetoacetyl-ACP synthase and acetyl transacylase activities. Its substrate specificity determines the biosynthesis of branched-chain and/or straight-chain of fatty acids. The polypeptide is Beta-ketoacyl-[acyl-carrier-protein] synthase III (Porphyra umbilicalis (Purple laver)).